The chain runs to 598 residues: MPCVQAQYGSSPQGASPASQSYSYHSSGEYSSDFLTPEFVKFSMDLTNTEITATTSLPSFSTFMDNYSTGYDVKPPCLYQMPLSGQQSSIKVEDIQMHNYQQHSHLPPQSEEMMPHSGSVYYKPSSPPTPTTPGFQVQHSPMWDDPGSLHNFHQNYVATTHMIEQRKTPVSRLSLFSFKQSPPGTPVSSCQMRFDGPLHVPMNPEPAGSHHVVDGQTFAVPNPIRKPASMGFPGLQIGHASQLLDTQVPSPPSRGSPSNEGLCAVCGDNAACQHYGVRTCEGCKGFFKRTVQKNAKYVCLANKNCPVDKRRRNRCQYCRFQKCLAVGMVKEVVRTDSLKGRRGRLPSKPKSPQEPSPPSPPVSLISALVRAHVDSNPAMTSLDYSRFQANPDYQMSGDDTQHIQQFYDLLTGSMEIIRGWAEKIPGFADLPKADQDLLFESAFLELFVLRLAYRSNPVEGKLIFCNGVVLHRLQCVRGFGEWIDSIVEFSSNLQNMNIDISAFSCIAALAMVTERHGLKEPKRVEELQNKIVNCLKDHVTFNNGGLNRPNYLSKLLGKLPELRTLCTQGLQRIFYLKLEDLVPPPAIIDKLFLDTLPF.

A disordered region spans residues 1–22 (MPCVQAQYGSSPQGASPASQSY). The span at 8–22 (YGSSPQGASPASQSY) shows a compositional bias: low complexity. The segment at residues 260 to 335 (EGLCAVCGDN…VGMVKEVVRT (76 aa)) is a DNA-binding region (nuclear receptor). 2 consecutive NR C4-type zinc fingers follow at residues 263-283 (CAVC…CEGC) and 299-323 (CLAN…FQKC). The Bipartite nuclear localization signal (NLS1) signature appears at 287–314 (FKRTVQKNAKYVCLANKNCPVDKRRRNR). The segment at 337-361 (SLKGRRGRLPSKPKSPQEPSPPSPP) is disordered. Residues 338–350 (LKGRRGRLPSKPK) carry the Nuclear localization signal (NLS1) motif. The segment covering 352–361 (PQEPSPPSPP) has biased composition (pro residues). The 236-residue stretch at 360-595 (PPVSLISALV…AIIDKLFLDT (236 aa)) folds into the NR LBD domain. Positions 443–452 (FLELFVLRLA) match the nuclear export sequence (NES1) motif. The short motif at 568 to 577 (QGLQRIFYLK) is the nuclear export sequence (NES2) element.

The protein belongs to the nuclear hormone receptor family. NR4 subfamily. In terms of assembly, interacts with SFPQ, NCOR2, SIN3A and HADC1. The interaction with NCOR2 increases in the absence of PITX3. Interacts with PER2. Expressed in a number of cell lines of T-cell, B-cell and fibroblast origin. Strong expression in brain tissue.

The protein localises to the cytoplasm. It is found in the nucleus. Transcriptional regulator which is important for the differentiation and maintenance of meso-diencephalic dopaminergic (mdDA) neurons during development. It is crucial for expression of a set of genes such as SLC6A3, SLC18A2, TH and DRD2 which are essential for development of mdDA neurons. The sequence is that of Nuclear receptor subfamily 4 group A member 2 (NR4A2) from Homo sapiens (Human).